A 414-amino-acid chain; its full sequence is ATP-dependent Clp protease ATP-binding subunit ClpX (414 aa).

The ClpX-type ZB domain occupies 1–51 (MADSKTKKKCSFCGRSENEVGFLITGMNGYICDSCATQAYEITQEALGEGR). Zn(2+) is bound by residues cysteine 10, cysteine 13, cysteine 32, and cysteine 35. An ATP-binding site is contributed by 120–127 (STGTGKTL).

It belongs to the ClpX chaperone family. Component of the ClpX-ClpP complex. Forms a hexameric ring that, in the presence of ATP, binds to fourteen ClpP subunits assembled into a disk-like structure with a central cavity, resembling the structure of eukaryotic proteasomes.

In terms of biological role, ATP-dependent specificity component of the Clp protease. It directs the protease to specific substrates. Can perform chaperone functions in the absence of ClpP. The chain is ATP-dependent Clp protease ATP-binding subunit ClpX from Bacteroides thetaiotaomicron (strain ATCC 29148 / DSM 2079 / JCM 5827 / CCUG 10774 / NCTC 10582 / VPI-5482 / E50).